The following is a 424-amino-acid chain: MHRKHLQEIPDQSGNVTTSFTWGWDSSKTSELLSGMGVSALEKEEVDSENIPHGLLSNLGHPQSPPRKRVKGKGSDKDFVIIRRPKLSRENFPGVSWDSLPDELLLGIFSCLCLPELLRVSGVCKRWYRLSLDESLWQSLDLAGKNLHPDVTVRLLSRGVVAFRCPRSFMEQPLGESFSSFRVQHMDLSNSVINVSNLHKILSECSKLQNLSLEGLQLSDPIVKTLAQNENLVRLNLCGCSGFSESAVATLLSSCSRLDELNLSWCFDFTEKHVQAAVAHLPNTITQLNLSGYRKNLQKTDLCTIIKRCPNLIRLDLSDSIMLKNDCFPEFFQLNYLQHLSLSRCYDIIPDTLLELGEIPTLKTLQVFGIVPEGTLQLLREALPRLQINCAYFTTIARPTMDSKKNLEIWGIKCRLTLQKPSCL.

A disordered region spans residues 52 to 73 (PHGLLSNLGHPQSPPRKRVKGK). Serine 64 is modified (phosphoserine). Positions 67–73 (RKRVKGK) match the Nuclear localization signal motif. N6-acetyllysine; by p300/EP300 is present on residues lysine 68 and lysine 71. Serine 75 carries the phosphoserine modification. One can recognise an F-box domain in the interval 94–140 (GVSWDSLPDELLLGIFSCLCLPELLRVSGVCKRWYRLSLDESLWQSL). LRR repeat units lie at residues 151–176 (VTVR…PLGE), 177–204 (SFSS…ILSE), 210–234 (NLSL…NLVR), 235–257 (LNLC…SCSR), 258–284 (LDEL…LPNT), 286–308 (TQLN…IIKR), 309–330 (CPNL…CFPE), 334–356 (LNYL…LLEL), 359–378 (IPTL…TLQL), and 380–401 (REAL…RPTM). At serine 179 the chain carries Phosphoserine.

Part of a SCF(SKP2) complex consisting of CUL1, RBX1, SKP1 and SKP2. Component of a SCF(SKP2)-like complex containing CUL1, SKP1, TRIM21 and SKP2. Interacts directly with CUL1 and SKP1. Interacts with ASB2 which is the substrate-recognition component of a probable ECS E3 ubiquitin-protein ligase complex; ASB2 is likely to bridge the formation of dimeric E3-ubiquitin-protein ligase complexes composed of an ECS complex and an SCF(SKP2) complex. Interacts with CKS1. Interacts with the cyclin-A-CDK2 complex. Interacts with ORC1, phosphorylated CDT1, phosphorylated RBL2, ELF4, phosphorylated RAG2, FOXO1, UBP43, MYC, TOB1, TAL1 and KMT2A/MLL1. Interacts with TRIM21. Interacts with cyclin-E. Interacts with CARM1. Phosphorylated on serine and threonine resudues in response to DNA damage, promoting 'Lys-63'-linked ubiquitination of NBN. In terms of processing, ubiquitinated by the APC/C complex, leading to its degradation by the proteasome. Deubiquitinated by USP13. Post-translationally, acetylation at Lys-68 and Lys-71 increases stability through impairment of APC/C-mediated proteolysis and promotes cytoplasmic retention. Deacetylated by SIRT3.

It is found in the cytoplasm. The protein localises to the nucleus. The protein operates within protein modification; protein ubiquitination. Functionally, substrate recognition component of a SCF (SKP1-CUL1-F-box protein) E3 ubiquitin-protein ligase complex which mediates the ubiquitination and subsequent proteasomal degradation of target proteins involved in cell cycle progression, signal transduction and transcription. Specifically recognizes phosphorylated CDKN1B/p27kip and is involved in regulation of G1/S transition. Degradation of CDKN1B/p27kip also requires CKS1. Recognizes target proteins ORC1, CDT1, RBL2, KMT2A/MLL1, CDK9, RAG2, NBN, FOXO1, UBP43, YTHDF2, and probably MYC, TOB1 and TAL1. Degradation of TAL1 also requires STUB1. Recognizes CDKN1A in association with CCNE1 or CCNE2 and CDK2. Promotes ubiquitination and destruction of CDH1 in a CK1-dependent manner, thereby regulating cell migration. Following phosphorylation in response to DNA damage, mediates 'Lys-63'-linked ubiquitination of NBN, promoting ATM recruitment to DNA damage sites and DNA repair via homologous recombination. In terms of biological role, through the ubiquitin-mediated proteasomal degradation of viral proteins may have an antiviral activity. The protein is S-phase kinase-associated protein 2 (Skp2) of Mus musculus (Mouse).